Consider the following 504-residue polypeptide: ATP synthase subunit alpha 2 (504 aa).

169–176 (GDRQTGKT) is a binding site for ATP.

Belongs to the ATPase alpha/beta chains family. F-type ATPases have 2 components, CF(1) - the catalytic core - and CF(0) - the membrane proton channel. CF(1) has five subunits: alpha(3), beta(3), gamma(1), delta(1), epsilon(1). CF(0) has three main subunits: a(1), b(2) and c(9-12). The alpha and beta chains form an alternating ring which encloses part of the gamma chain. CF(1) is attached to CF(0) by a central stalk formed by the gamma and epsilon chains, while a peripheral stalk is formed by the delta and b chains.

The protein resides in the cell membrane. The enzyme catalyses ATP + H2O + 4 H(+)(in) = ADP + phosphate + 5 H(+)(out). In terms of biological role, produces ATP from ADP in the presence of a proton gradient across the membrane. The alpha chain is a regulatory subunit. The sequence is that of ATP synthase subunit alpha 2 from Listeria welshimeri serovar 6b (strain ATCC 35897 / DSM 20650 / CCUG 15529 / CIP 8149 / NCTC 11857 / SLCC 5334 / V8).